Reading from the N-terminus, the 53-residue chain is Large ribosomal subunit protein bL33B (53 aa).

Belongs to the bacterial ribosomal protein bL33 family.

The polypeptide is Large ribosomal subunit protein bL33B (Sorangium cellulosum (strain So ce56) (Polyangium cellulosum (strain So ce56))).